The sequence spans 287 residues: Bifunctional protein FolD (287 aa).

NADP(+) contacts are provided by residues 166–168 (GAS), S191, and I232.

Belongs to the tetrahydrofolate dehydrogenase/cyclohydrolase family. Homodimer.

It carries out the reaction (6R)-5,10-methylene-5,6,7,8-tetrahydrofolate + NADP(+) = (6R)-5,10-methenyltetrahydrofolate + NADPH. The enzyme catalyses (6R)-5,10-methenyltetrahydrofolate + H2O = (6R)-10-formyltetrahydrofolate + H(+). It functions in the pathway one-carbon metabolism; tetrahydrofolate interconversion. Functionally, catalyzes the oxidation of 5,10-methylenetetrahydrofolate to 5,10-methenyltetrahydrofolate and then the hydrolysis of 5,10-methenyltetrahydrofolate to 10-formyltetrahydrofolate. This Haemophilus ducreyi (strain 35000HP / ATCC 700724) protein is Bifunctional protein FolD.